Consider the following 78-residue polypeptide: Protein EcdD (78 aa).

In terms of biological role, involved in the non-oxidative decarboxylation and detoxification of phenolic derivatives under anaerobic conditions, however the precise biochemical function in metabolism of phenolic acid is unknown. The polypeptide is Protein EcdD (Escherichia coli O157:H7).